Reading from the N-terminus, the 43-residue chain is METATLVTIFISGSLVSFTGYALYTAFGQPSQQLRDPFEEHGD.

A helical membrane pass occupies residues 5 to 27 (TLVTIFISGSLVSFTGYALYTAF).

The protein belongs to the PsbN family.

Its subcellular location is the plastid. It is found in the chloroplast thylakoid membrane. Its function is as follows. May play a role in photosystem I and II biogenesis. This chain is Protein PsbN, found in Piper cenocladum (Ant piper).